We begin with the raw amino-acid sequence, 564 residues long: Pyranose 2-oxidase (564 aa).

Residues 1 to 25 (MPIRLSKEKINDLLQRSQGDLTSSQ) constitute a propeptide that is removed on maturation. Position 158 is a tele-8alpha-FAD histidine (histidine 158). The substrate site is built by glutamine 392 and histidine 394. The active-site Proton acceptor is histidine 498. Asparagine 541 is a catalytic residue.

It belongs to the GMC oxidoreductase family. As to quaternary structure, homotetramer. FAD serves as cofactor.

It catalyses the reaction D-glucose + O2 = 2-dehydro-D-glucose + H2O2. Its function is as follows. Catalyzes the oxidation of various aldopyranoses and disaccharides on carbon-2 to the corresponding 2-keto sugars concomitant with the reduction of O(2) to H(2)O(2). The preferred substrate is D-glucose which is converted to 2-dehydro-D-glucose. Acts also on D-xylose, L-sorbose, D-galactose and 1,5-anhydroglucitol, a diagnostic marker of diabetes mellitus. In Tricholoma matsutake (Matsutake mushroom), this protein is Pyranose 2-oxidase (p2ox).